A 318-amino-acid chain; its full sequence is MKPLKIIFAGTPDFAARHLQALIDSEHDVIATYTQPDRPAGRGKKLTASPVKALALEHAIPVFQPASLRNEEAQAELAALNADIMIVVAYGLILPKVVLDTPRLGCINVHGSILPRWRGAAPIQRALWAGDTETGVTIMQMDIGLDTGDMLLKTHLPIEATDTSASLYEKLAEQGPKALVQALIGLSDGSLKAQKQDETLANYAEKLSKEEARLDWNKSAKQLWQDIRAFNPWPVSYFEHQQSVIKVWQADYSAELCSQAPGTIIAATKQGIEIATAEGKLMIKTMQLPNKKPLDVADILNARGDWFTAGVCLNQEAN.

112–115 is a binding site for (6S)-5,6,7,8-tetrahydrofolate; the sequence is SILP.

It belongs to the Fmt family.

It catalyses the reaction L-methionyl-tRNA(fMet) + (6R)-10-formyltetrahydrofolate = N-formyl-L-methionyl-tRNA(fMet) + (6S)-5,6,7,8-tetrahydrofolate + H(+). In terms of biological role, attaches a formyl group to the free amino group of methionyl-tRNA(fMet). The formyl group appears to play a dual role in the initiator identity of N-formylmethionyl-tRNA by promoting its recognition by IF2 and preventing the misappropriation of this tRNA by the elongation apparatus. This Shewanella frigidimarina (strain NCIMB 400) protein is Methionyl-tRNA formyltransferase.